A 491-amino-acid chain; its full sequence is Protein phosphatase ppm-1.G (491 aa).

One can recognise a PPM-type phosphatase domain in the interval 23 to 486 (SYACTTMQGW…DNMTVICTTF (464 aa)). Positions 57 and 58 each coordinate Mn(2+). The span at 112–125 (KDIGDEGKPKKAGG) shows a compositional bias: basic and acidic residues. Disordered regions lie at residues 112–136 (KDIGDEGKPKKAGGEADSEDEADRI) and 170–294 (GDVS…EEMV). 2 stretches are compositionally biased toward acidic residues: residues 173–192 (SDDSEDEDEDEEEAEEQDDT) and 260–294 (ATEEEDEDDSDKEFVADEEEDDEDAEDEQSDEEMV). Residues Asp-428 and Asp-477 each coordinate Mn(2+).

Belongs to the PP2C family. It depends on Mg(2+) as a cofactor. The cofactor is Mn(2+).

The enzyme catalyses O-phospho-L-seryl-[protein] + H2O = L-seryl-[protein] + phosphate. It carries out the reaction O-phospho-L-threonyl-[protein] + H2O = L-threonyl-[protein] + phosphate. The sequence is that of Protein phosphatase ppm-1.G from Caenorhabditis elegans.